A 723-amino-acid polypeptide reads, in one-letter code: MAAAATMAAAARELVLRAGASDVEEEEGPLGGGSGLQEPLQLGELDITSDEFILDEVDVHIQANLEDELVKEALKTGVDLRHYSKQVELELQQIEQKSIRDYIQESENIASLHNQITACDAVLERMEQMLGAFQSDLSSISSEIRTLQEQSGAMNIRLRNRQAVRGKLGELVDGLVVPSALVTAILEAPVTEPRFLEQLQELDAKAAAVREQEAMGTAACADVRGVLDRLRVKAVTKIREFILQKIYSFRKPMTNYQIPQAALLKYRFFYQFLLGNERATAKEIRDEYVETLSKIYLSYYRSYVGRLMKVQYEEVAEKDDLMGVEDTAKKGFFSKPSLRSRNTIFTLGTRGTVISPAELEAPILVPHTAQRGEQRYPFEALFRSQHYALLDNSCREYLFICEFFIVSGPAAHDLFHAVMGRTLSMTLKHLESYLADCYDAIAVFLCIHIVLRFRNIAAKRDVPALDRYWEQVLALLWPRFELILEMNVQSVRSTDPQRLGGLDTRPHYITRRYAEFSSALVSINQTIPNERTLQLLGQLQVEVENFVLRVAAEFSSRKEQLVFLINNYDMMLGVLMERAADDSKEVESFQQLLNARTQEFIEELLSPPFGGLVAFVKEAEALIERGQAERLRGEEARVTQLIRGFGSSWKASVESLSQDVMRSFTNFRNGTSIIQGALTQLIQLYHRFHRVLSQPQLRALPARAELINIHHLMVELKKHKPNF.

Ala-2 is subject to N-acetylalanine. Coiled-coil stretches lie at residues Glu-107–Glu-127 and Arg-194–Ala-214. Ser-355 carries the post-translational modification Phosphoserine.

It belongs to the VPS52 family. As to quaternary structure, component of the Golgi-associated retrograde protein (GARP) complex, also called VFT (VPS fifty-three) complex, composed of VPS51, VPS52, VPS53 and VPS54. Component of the endosome-associated retrograde protein (EARP) complex, composed of VPS51, VPS52, VPS53 and VPS50/Syndetin. EIPR1 interacts with both EARP and GARP complexes and mediates the recruitment of the GARP complex to the trans-Golgi network. Interacts with RAB6A and STX10. Interacts with BLTP3B.

It is found in the golgi apparatus. The protein resides in the trans-Golgi network membrane. It localises to the endosome membrane. Its subcellular location is the recycling endosome. In terms of biological role, acts as a component of the GARP complex that is involved in retrograde transport from early and late endosomes to the trans-Golgi network (TGN). The GARP complex is required for the maintenance of the cycling of mannose 6-phosphate receptors between the TGN and endosomes, this cycling is necessary for proper lysosomal sorting of acid hydrolases such as CTSD. Acts as a component of the EARP complex that is involved in endocytic recycling. The EARP complex associates with Rab4-positive endosomes and promotes recycling of internalized transferrin receptor (TFRC) to the plasma membrane. In Mus musculus (Mouse), this protein is Vacuolar protein sorting-associated protein 52 homolog (Vps52).